An 82-amino-acid polypeptide reads, in one-letter code: Putative antitoxin VapB23 (82 aa).

Functionally, putative antitoxin component of a possible type II toxin-antitoxin (TA) system. The cognate toxin is VapC23. This is Putative antitoxin VapB23 (vapB23) from Mycobacterium tuberculosis (strain ATCC 25618 / H37Rv).